Reading from the N-terminus, the 164-residue chain is MTDTTAAPPAAPEDGAPGETGIRIIAQFVRDFSFESPHAPDSLRAGGAPPAIDMGVEMNARGRPDGLFEVDLKLSARATRDEQPVFHVEVLYGGLFHIAGVPEGDLEPVLLIECPRFLFPYARRLISDVTTEGGFPPFLIDPIDFAGVYAARKAQAEGVVVGNA.

It belongs to the SecB family. Homotetramer, a dimer of dimers. One homotetramer interacts with 1 SecA dimer.

The protein resides in the cytoplasm. Functionally, one of the proteins required for the normal export of preproteins out of the cell cytoplasm. It is a molecular chaperone that binds to a subset of precursor proteins, maintaining them in a translocation-competent state. It also specifically binds to its receptor SecA. This is Protein-export protein SecB from Caulobacter sp. (strain K31).